The primary structure comprises 492 residues: Phosphoenolpyruvate carboxylase (492 aa).

It belongs to the PEPCase type 2 family. As to quaternary structure, homotetramer. Requires Mg(2+) as cofactor.

It catalyses the reaction oxaloacetate + phosphate = phosphoenolpyruvate + hydrogencarbonate. In terms of biological role, catalyzes the irreversible beta-carboxylation of phosphoenolpyruvate (PEP) to form oxaloacetate (OAA), a four-carbon dicarboxylic acid source for the tricarboxylic acid cycle. The sequence is that of Phosphoenolpyruvate carboxylase from Halobacterium salinarum (strain ATCC 29341 / DSM 671 / R1).